Here is a 256-residue protein sequence, read N- to C-terminus: tRNA (guanine-N(1)-)-methyltransferase (256 aa).

Residues Gly-117 and 137-142 contribute to the S-adenosyl-L-methionine site; that span reads LGDFVL.

It belongs to the RNA methyltransferase TrmD family. In terms of assembly, homodimer.

It is found in the cytoplasm. The catalysed reaction is guanosine(37) in tRNA + S-adenosyl-L-methionine = N(1)-methylguanosine(37) in tRNA + S-adenosyl-L-homocysteine + H(+). Specifically methylates guanosine-37 in various tRNAs. The sequence is that of tRNA (guanine-N(1)-)-methyltransferase from Methylibium petroleiphilum (strain ATCC BAA-1232 / LMG 22953 / PM1).